The following is a 257-amino-acid chain: Kallikrein-1 (257 aa).

A signal peptide spans 1-18 (MWFLVLCLALSLGGTGRA). Residues 19-24 (PPIQSR) constitute a propeptide, activation peptide. The 230-residue stretch at 25–254 (IVGGWECSQP…YVKWIEDTIA (230 aa)) folds into the Peptidase S1 domain. Cystine bridges form between cysteine 31-cysteine 169, cysteine 47-cysteine 63, cysteine 148-cysteine 215, cysteine 180-cysteine 194, and cysteine 205-cysteine 230. Histidine 62 functions as the Charge relay system in the catalytic mechanism. The O-linked (GalNAc...) serine glycan is linked to serine 90. N-linked (GlcNAc...) asparagine glycosylation occurs at asparagine 99. O-linked (GalNAc...) serine glycosylation is present at serine 101. A glycan (N-linked (GlcNAc...) asparagine) is linked at asparagine 105. The active-site Charge relay system is the aspartate 116. Asparagine 160 carries an N-linked (GlcNAc...) asparagine glycan. An O-linked (GalNAc...) serine glycan is attached at serine 162. Serine 209 serves as the catalytic Charge relay system.

The protein belongs to the peptidase S1 family. Kallikrein subfamily.

It catalyses the reaction Preferential cleavage of Arg-|-Xaa bonds in small molecule substrates. Highly selective action to release kallidin (lysyl-bradykinin) from kininogen involves hydrolysis of Met-|-Xaa or Leu-|-Xaa.. Functionally, glandular kallikreins cleave Met-Lys and Arg-Ser bonds in kininogen to release Lys-bradykinin. The sequence is that of Kallikrein-1 (KLK1) from Macaca fascicularis (Crab-eating macaque).